The sequence spans 664 residues: uncharacterized protein (664 aa).

The N-terminal stretch at 1–25 (MSWKRYLKWVSFAIIPLLFANTSIK) is a signal peptide. The helical transmembrane segment at 625–645 (IIVYLIIGFSVLVLFITVFIY) threads the bilayer.

It belongs to the MG414/MG415 family.

The protein localises to the cell membrane. This is an uncharacterized protein from Mycoplasma genitalium (strain ATCC 33530 / DSM 19775 / NCTC 10195 / G37) (Mycoplasmoides genitalium).